We begin with the raw amino-acid sequence, 888 residues long: MVSSKLSFVATAVAALAPLASAFDASSRSNLAIYWGQGPNQLRLSHFCQETSLDIINIGFINYFPDMSPGHWPGSNFGNQCDGSVYVTNDGVVTKLLSGCHQIMEDIPICQAAGKKVLLSIGGAYPPDQSILSEDSAVAFATFLWGAFGPVAEGWEGPRPFGDVVVDGFDFDIEHNGGFGYATMANTFRQYFNQVPERKFYLSAAPQCIIPDAQLSDAIFNAAFDFIWIQYYNTAACSAKSFIDTSLGTFNFDAWVTVLKASASKDAKLYVGLPASETAANQGYYLTPDEVESLVSTYMDRYPDTFGGIMLWEATASENNQIDGAPYADHMKDILLHCDPSPPVTSSSAIPSSTPVTTPSPSSSAVPSSTPAVSETPSPSSSAVPSSTPVASSTPVVPGTSASSSPVSSSSAVASSTPVVPGTSASSSPVSSSSAVASSTPVVPGTSTSPSTPVIPGTSASSSPVSSSSAVASSTPVVPGTSASSSPVSSSSAVASSTPVVPGTSASSSPVSSSSAVASSTPVVPGTSVPSSTPAIPGGSSSSSEAVASSTPLVTLTLTVSPTPAPSSSESSSTDLSSSTQTDVGTAPSQPAGPSTTATATTSSSSSSTDESSTTVGSGNGNGSGSTTTTAATDSITAAPTATSSATATGATSEPVTITTIIVTSYIDICPTGFTTVTTTYTTTYCPGTNTATATATVTNPPSGPGGAGSQTTAPTVPEGWTTTVTICTQCAAKPTTVTLTLPVTETGSTSTDAVPAPPAATGEGSNPTQPSGASPTGGNGSFSEEPVPPPAVTQVSTSTEIVTLVRPTSSRPLILGTGTVHPSSTLAVKPSAKPSGQNSGSSSHVPIPPSYTQEAVSPLSTGAASRVTGLGHGLVLTVLTLSAFFVL.

The first 22 residues, 1–22 (MVSSKLSFVATAVAALAPLASA), serve as a signal peptide directing secretion. The region spanning 29–338 (SNLAIYWGQG…DHMKDILLHC (310 aa)) is the GH18 domain. Glu-174 acts as the Proton donor in catalysis. 3 disordered regions span residues 338–631 (CDPS…TTTA), 743–799 (PVTE…VSTS), and 813–855 (PLIL…YTQE). The segment covering 344 to 617 (VTSSSAIPSS…STDESSTTVG (274 aa)) has biased composition (low complexity). Asn-622 carries N-linked (GlcNAc...) asparagine glycosylation. The segment covering 764–775 (EGSNPTQPSGAS) has biased composition (polar residues). The N-linked (GlcNAc...) asparagine glycan is linked to Asn-780. Residues 835-855 (PSGQNSGSSSHVPIPPSYTQE) show a composition bias toward polar residues. The GPI-anchor amidated glycine moiety is linked to residue Gly-863. Positions 864-888 (AASRVTGLGHGLVLTVLTLSAFFVL) are cleaved as a propeptide — removed in mature form.

It belongs to the glycosyl hydrolase 18 family. Chitinase class III subfamily.

It is found in the cell membrane. The protein localises to the secreted. The protein resides in the cell wall. It catalyses the reaction Random endo-hydrolysis of N-acetyl-beta-D-glucosaminide (1-&gt;4)-beta-linkages in chitin and chitodextrins.. Its activity is regulated as follows. The cyclic peptide natural product argifin acts as a specific inhibitor. GPI-anchored chitinase involved in the degradation of chitin, a component of the cell walls of fungi and exoskeletal elements of some animals (including worms and arthropods). Required to reshape the cell wall at the sites where cell wall remodeling and/or cell wall maturation actively take place such as sites of conidia formation. The protein is Endochitinase A1 (chiA1) of Aspergillus fumigatus (strain ATCC MYA-4609 / CBS 101355 / FGSC A1100 / Af293) (Neosartorya fumigata).